Reading from the N-terminus, the 195-residue chain is Protease (195 aa).

The region spanning 71-149 is the Peptidase A2 domain; sequence ALMLVDTGAE…DKWQILGRDV (79 aa). Residue D76 is part of the active site.

The polypeptide is Protease (Bos taurus (Bovine)).